Here is a 410-residue protein sequence, read N- to C-terminus: Hemocyanin, beta-C chain unit D (410 aa).

His-44 and His-55 together coordinate Cu cation. A disulfide bridge connects residues Cys-50 and Cys-59. The segment at residues 60–62 (CVH) is a cross-link (2'-(S-cysteinyl)-histidine (Cys-His)). Positions 71, 175, 179, and 206 each coordinate Cu cation. Cys-165 and Cys-232 are oxidised to a cystine. N-linked (GlcNAc...) asparagine glycosylation is present at Asn-253. Cys-321 and Cys-332 form a disulfide bridge.

The protein belongs to the tyrosinase family. Hemocyanin subfamily. Decamers of large identical subunits (450 kDa), each containing 8 globular oxygen-binding functional units. Requires Cu(2+) as cofactor.

In terms of biological role, hemocyanins are copper-containing oxygen carriers occurring freely dissolved in the hemolymph of many mollusks and arthropods. The sequence is that of Hemocyanin, beta-C chain unit D from Helix pomatia (Roman snail).